The following is a 210-amino-acid chain: Large ribosomal subunit protein uL3 (210 aa).

The tract at residues 125 to 154 (RHGFRGGPKTHGQSDRHRAPGSIGAGTTPG) is disordered.

It belongs to the universal ribosomal protein uL3 family. Part of the 50S ribosomal subunit. Forms a cluster with proteins L14 and L19.

In terms of biological role, one of the primary rRNA binding proteins, it binds directly near the 3'-end of the 23S rRNA, where it nucleates assembly of the 50S subunit. The polypeptide is Large ribosomal subunit protein uL3 (Chloroflexus aggregans (strain MD-66 / DSM 9485)).